The primary structure comprises 415 residues: Acetyl-CoA acetyltransferase 1 (415 aa).

Cysteine 99 acts as the Acyl-thioester intermediate in catalysis. Residue lysine 239 coordinates CoA. Alanine 256 serves as a coordination point for K(+). Residue serine 260 coordinates CoA. Valine 357 is a K(+) binding site. Residues histidine 361 and cysteine 391 each act as proton acceptor in the active site.

This sequence belongs to the thiolase-like superfamily. Thiolase family. In terms of tissue distribution, expressed in the vascular system of roots, cotyledons, young leaves, fully expanded leaves, stems, flowers, and funiculi of siliques.

Its subcellular location is the cytoplasm. It is found in the peroxisome. It catalyses the reaction 2 acetyl-CoA = acetoacetyl-CoA + CoA. Its pathway is metabolic intermediate biosynthesis; (R)-mevalonate biosynthesis; (R)-mevalonate from acetyl-CoA: step 1/3. Catalyzes the condensation of two molecules of acetyl-CoA to produce acetoacetyl-CoA. The polypeptide is Acetyl-CoA acetyltransferase 1 (Arabidopsis thaliana (Mouse-ear cress)).